The chain runs to 583 residues: Multidrug transporter QDR2 (583 aa).

The interval 23–46 (EKYDGPDLSEVDSEDNDKMIKTNE) is disordered. N60 carries an N-linked (GlcNAc...) asparagine glycan. The helical transmembrane segment at 88-108 (AYTGLFSTMAGAIYYPVLSVI) threads the bilayer. A glycan (N-linked (GlcNAc...) asparagine) is linked at N120. 5 consecutive transmembrane segments (helical) span residues 121–141 (ITVVVYFIFQGIAPTLMGGLA), 148–168 (PVVLFAVTVYFGACIGLACAQ), 178–198 (CLQAAGISPVIAINSGIIGDV), 208–228 (VGYISGFQVLGSAFGALIGAG), and 238–258 (IFWFLAIGSGVCLVFSIIMLP). N267 carries an N-linked (GlcNAc...) asparagine glycan. Helical transmembrane passes span 323 to 342 (ILLVTAGIQFATWSTHQTAL) and 354 to 374 (VAKIGLCYLPTGICTLISIVT). A glycan (N-linked (GlcNAc...) asparagine) is linked at N380. 4 helical membrane passes run 432–452 (HAAFVTLLLSSSGFVAFGWCI), 458–478 (LASVLVMSGFASLFSNCILTF), 493–513 (TATGCLNLFRCLLSALFIGCL), and 524–544 (GVFTFLGALTALSACPLFYLL).

Belongs to the major facilitator superfamily. CAR1 family.

It is found in the cell membrane. Its function is as follows. Multidrug resistance transporter involved in resistance to the antifungal drugs miconazole, tioconazole, clotrimazole, and ketoconazole; as well as to quinidine. Decreases the intracellular accumulation of clotrimazole in and plays a role in the extrusion of this antifungal from preloaded cells. This chain is Multidrug transporter QDR2, found in Candida glabrata (strain ATCC 2001 / BCRC 20586 / JCM 3761 / NBRC 0622 / NRRL Y-65 / CBS 138) (Yeast).